The sequence spans 420 residues: Sodium-dependent phosphate transport protein 4 (420 aa).

The segment at Met-1 to Gln-21 is disordered. Asn-49, Asn-60, Asn-68, and Asn-77 each carry an N-linked (GlcNAc...) asparagine glycan. Helical transmembrane passes span Ser-126–Ile-146, Phe-154–Ile-174, Ile-218–Tyr-238, Leu-256–Ala-276, Ile-292–Gly-314, Thr-319–Leu-341, Gly-357–Asp-377, and Val-385–Glu-405.

Belongs to the major facilitator superfamily. Sodium/anion cotransporter family. Expressed in the liver and kidney. It is detected in proximal tubules in renal cortex as well as some tubules and glomeruli, with highest expression at the apical side of proximal tubules (at protein level).

It is found in the endoplasmic reticulum membrane. Its subcellular location is the cell membrane. It catalyses the reaction urate(in) + Na(+)(out) = urate(out) + Na(+)(in). Transports organic anions in a voltage-driven, multispecific, manner, on the apical side of renal proximal tubule. In particular, participates in the secretion of urate from the cell into the lumen. Urate is the end product of purine metabolism. May have roles in the metabolism and secretion of estrone sulfate, estradiol-17-beta-glucuronide, ochratoxin A, as wells as drugs such as bumetanide. This chain is Sodium-dependent phosphate transport protein 4 (SLC17A3), found in Homo sapiens (Human).